A 354-amino-acid polypeptide reads, in one-letter code: Ferrochelatase (354 aa).

His204 and Glu306 together coordinate Fe cation.

It belongs to the ferrochelatase family.

Its subcellular location is the cytoplasm. It carries out the reaction heme b + 2 H(+) = protoporphyrin IX + Fe(2+). It participates in porphyrin-containing compound metabolism; protoheme biosynthesis; protoheme from protoporphyrin-IX: step 1/1. Functionally, catalyzes the ferrous insertion into protoporphyrin IX. In Coxiella burnetii (strain CbuK_Q154) (Coxiella burnetii (strain Q154)), this protein is Ferrochelatase.